A 146-amino-acid chain; its full sequence is Hemoglobin subunit beta-1 (146 aa).

Positions 2-146 (KWTDKERAVI…VVSALGKQYC (145 aa)) constitute a Globin domain. His63 and His92 together coordinate heme b.

It belongs to the globin family. Heterotetramer of two alpha chains and two beta chains. As to expression, red blood cells.

Its function is as follows. Involved in oxygen transport from gills to the various peripheral tissues. This chain is Hemoglobin subunit beta-1, found in Lycodes reticulatus (Arctic eelpout).